The primary structure comprises 133 residues: Nucleoside diphosphate kinase (133 aa).

ATP is bound by residues K9, F57, R85, T91, R102, and N112. H115 acts as the Pros-phosphohistidine intermediate in catalysis.

The protein belongs to the NDK family. Mg(2+) serves as cofactor.

It is found in the cytoplasm. The catalysed reaction is a 2'-deoxyribonucleoside 5'-diphosphate + ATP = a 2'-deoxyribonucleoside 5'-triphosphate + ADP. It carries out the reaction a ribonucleoside 5'-diphosphate + ATP = a ribonucleoside 5'-triphosphate + ADP. Major role in the synthesis of nucleoside triphosphates other than ATP. The ATP gamma phosphate is transferred to the NDP beta phosphate via a ping-pong mechanism, using a phosphorylated active-site intermediate. The chain is Nucleoside diphosphate kinase from Methanococcus maripaludis (strain DSM 14266 / JCM 13030 / NBRC 101832 / S2 / LL).